We begin with the raw amino-acid sequence, 773 residues long: Probable serine/threonine-protein kinase MARK-C (773 aa).

Polar residues predominate over residues 1–27 (MESNKSSSHGDVSTSPSFLNNHHQFNN). The interval 1–32 (MESNKSSSHGDVSTSPSFLNNHHQFNNGGDII) is disordered. The 255-residue stretch at 46–300 (YEVGKTLGNG…IQELKNHPWT (255 aa)) folds into the Protein kinase domain. ATP contacts are provided by residues 52-60 (LGNGTFGKV) and Lys75. The active-site Proton acceptor is the Asp171. Residues 362 to 390 (RYASKEVENLKSKLELLSKRKKSFSDKRN) adopt a coiled-coil conformation. Disordered regions lie at residues 382–445 (KKSF…SQGS), 462–487 (DNDI…NKDI), and 558–588 (YSIQ…TNLR). Over residues 405 to 443 (DLSSNNNNNQQQQNSPPSKTNSSSTSSSNRESNNNSPSQ) the composition is skewed to low complexity. Positions 445 to 474 (SIKEISLDELDNHIEQLDNDIENSDNNKSS) form a coiled coil. Positions 468–478 (SDNNKSSSLTR) are enriched in polar residues. Positions 561 to 573 (QQQQLQQQQQQQQ) are enriched in low complexity. The KA1 domain maps to 724-773 (CFDEDNSVKFQIEIVKICNLDLTGIQLKRLSGDTWKYKDICTELVESMKL).

Belongs to the protein kinase superfamily. CAMK Ser/Thr protein kinase family. SNF1 subfamily.

It carries out the reaction L-seryl-[protein] + ATP = O-phospho-L-seryl-[protein] + ADP + H(+). The enzyme catalyses L-threonyl-[protein] + ATP = O-phospho-L-threonyl-[protein] + ADP + H(+). The sequence is that of Probable serine/threonine-protein kinase MARK-C (mrkC) from Dictyostelium discoideum (Social amoeba).